The primary structure comprises 1400 residues: DNA topoisomerase 2 (1400 aa).

A compositionally biased stretch (low complexity) spans 1 to 30; sequence MSSFESDSASDAESAFSDASSDFTPSSSVK. A disordered region spans residues 1 to 57; that stretch reads MSSFESDSASDAESAFSDASSDFTPSSSVKSKGKVPLRDSTNTTAQPSAPATGDASD. A compositionally biased stretch (polar residues) spans 39–57; sequence DSTNTTAQPSAPATGDASD. ATP contacts are provided by residues N117, N146, 174–176, and 187–194; these read SSN and GRNGYGAK. The segment at 379 to 386 is interaction with DNA; the sequence is TKKEKGKK. 415 to 417 serves as a coordination point for ATP; sequence QTK. The Toprim domain maps to 497 to 613; that stretch reads CTLILTEGDS…GLLEIPGFLL (117 aa). Mg(2+) contacts are provided by E503, D582, and D584. One can recognise a Topo IIA-type catalytic domain in the interval 749–1214; the sequence is IPSILDGFKP…SAKDLWNSDL (466 aa). The active-site O-(5'-phospho-DNA)-tyrosine intermediate is the Y839. Residues 1019 to 1028 form an interaction with DNA region; it reads KLISSISLSN. The segment at 1235 to 1400 is disordered; it reads FGPTAKTSTR…NESDEDYMSE (166 aa). Over residues 1262–1271 the composition is skewed to low complexity; it reads SSTPKASTPT. Residues 1312 to 1321 show a composition bias toward basic residues; the sequence is PKRKTPKSKP. Residues 1389–1400 are compositionally biased toward acidic residues; it reads DGNESDEDYMSE.

It belongs to the type II topoisomerase family. In terms of assembly, homodimer. The cofactor is Mg(2+). Requires Mn(2+) as cofactor. It depends on Ca(2+) as a cofactor.

It localises to the nucleus. The catalysed reaction is ATP-dependent breakage, passage and rejoining of double-stranded DNA.. Its function is as follows. Control of topological states of DNA by transient breakage and subsequent rejoining of DNA strands. Topoisomerase II makes double-strand breaks. This Meyerozyma guilliermondii (strain ATCC 6260 / CBS 566 / DSM 6381 / JCM 1539 / NBRC 10279 / NRRL Y-324) (Yeast) protein is DNA topoisomerase 2 (TOP2).